The sequence spans 192 residues: Phosphoheptose isomerase (192 aa).

The region spanning 37–192 (LADSFKAGGK…IQLIEKEMVK (156 aa)) is the SIS domain. 52–54 (NGG) is a binding site for substrate. Residues histidine 61 and glutamate 65 each contribute to the Zn(2+) site. Substrate contacts are provided by residues glutamate 65, 93-94 (ND), 119-121 (STS), serine 124, and glutamine 172. Zn(2+) contacts are provided by glutamine 172 and histidine 180.

The protein belongs to the SIS family. GmhA subfamily. As to quaternary structure, homotetramer. Zn(2+) is required as a cofactor.

It localises to the cytoplasm. The enzyme catalyses 2 D-sedoheptulose 7-phosphate = D-glycero-alpha-D-manno-heptose 7-phosphate + D-glycero-beta-D-manno-heptose 7-phosphate. Its pathway is carbohydrate biosynthesis; D-glycero-D-manno-heptose 7-phosphate biosynthesis; D-glycero-alpha-D-manno-heptose 7-phosphate and D-glycero-beta-D-manno-heptose 7-phosphate from sedoheptulose 7-phosphate: step 1/1. Catalyzes the isomerization of sedoheptulose 7-phosphate in D-glycero-D-manno-heptose 7-phosphate. The sequence is that of Phosphoheptose isomerase from Enterobacter sp. (strain 638).